The sequence spans 191 residues: 3-isopropylmalate dehydratase small subunit (191 aa).

It belongs to the LeuD family. LeuD type 1 subfamily. In terms of assembly, heterodimer of LeuC and LeuD.

The enzyme catalyses (2R,3S)-3-isopropylmalate = (2S)-2-isopropylmalate. Its pathway is amino-acid biosynthesis; L-leucine biosynthesis; L-leucine from 3-methyl-2-oxobutanoate: step 2/4. Catalyzes the isomerization between 2-isopropylmalate and 3-isopropylmalate, via the formation of 2-isopropylmaleate. The sequence is that of 3-isopropylmalate dehydratase small subunit from Staphylococcus saprophyticus subsp. saprophyticus (strain ATCC 15305 / DSM 20229 / NCIMB 8711 / NCTC 7292 / S-41).